The primary structure comprises 476 residues: Amino acid permease 3 (476 aa).

Residues 1-33 are Cytoplasmic-facing; that stretch reads MVQNHQTVLAVDMPQTGGSKYLDDDGKNKRTGS. A helical transmembrane segment spans residues 34 to 54; sequence VWTASAHIITAVIGSGVLSLA. The Extracellular portion of the chain corresponds to 55 to 57; the sequence is WAT. The chain crosses the membrane as a helical span at residues 58–78; the sequence is AQLGWLAGPVVMLLFSAVTYF. At 79–122 the chain is on the cytoplasmic side; the sequence is TSSLLAACYRSGDPISGKRNYTYMDAVRSNLGGVKVTLCGIVQY. Residues 123 to 143 traverse the membrane as a helical segment; that stretch reads LNIFGVAIGYTIASAISMMAI. Topologically, residues 144-166 are extracellular; it reads KRSNCFHKSGGKDPCHMNSNPYM. 2 consecutive transmembrane segments (helical) span residues 167–187 and 188–208; these read IAFG…QLWW and LSIL…ALGI. Residues 209–277 are Extracellular-facing; sequence AQVVVNGKVK…EEKTMKKATL (69 aa). Residues 278–298 form a helical membrane-spanning segment; sequence VSVSVTTMFYMLCGCMGYAAF. The Cytoplasmic portion of the chain corresponds to 299–300; it reads GD. The chain crosses the membrane as a helical span at residues 301–321; the sequence is LSPGNLLTGFGFYNPYWLLDI. At 322–324 the chain is on the extracellular side; sequence ANA. Residues 325-345 traverse the membrane as a helical segment; that stretch reads AIVIHLIGAYQVYCQPLFAFI. Over 346 to 384 the chain is Cytoplasmic; that stretch reads EKQASIQFPDSEFIAKDIKIPIPGFKPLRLNVFRLIWRT. Transmembrane regions (helical) follow at residues 385-405 and 406-426; these read VFVI…DVVG and LLGA…MYIA. Over 427 to 441 the chain is Cytoplasmic; sequence QKKIPRWSTRWVCLQ. A helical transmembrane segment spans residues 442 to 462; sequence VFSLGCLVVSIAAAAGSIAGV. The Extracellular segment spans residues 463 to 476; that stretch reads LLDLKSYKPFRSEY.

It belongs to the amino acid/polyamine transporter 2 family. Amino acid/auxin permease (AAAP) (TC 2.A.18.2) subfamily. As to expression, expressed in the root phloem. Detected in stamens, in cotyledons, and in major veins of mature leaves.

The protein localises to the cell membrane. The protein resides in the nucleus membrane. It is found in the endomembrane system. With respect to regulation, inhibited by carbonylcyanide m-chlorophenylhydrazone and 2,4-dinitrophenol. Functionally, amino acid-proton symporter. Stereospecific transporter with a broad specificity for GABA, tryptophan and both neutral and basic amino acids. High affinity transport of cationic amino acids. In Arabidopsis thaliana (Mouse-ear cress), this protein is Amino acid permease 3 (AAP3).